Here is a 307-residue protein sequence, read N- to C-terminus: Oxygen-dependent coproporphyrinogen-III oxidase (307 aa).

Substrate is bound at residue Ser-99. A divalent metal cation contacts are provided by His-103 and His-113. His-113 (proton donor) is an active-site residue. A substrate-binding site is contributed by 115–117; that stretch reads NVR. Positions 152 and 182 each coordinate a divalent metal cation. Residues 247-282 form an important for dimerization region; the sequence is YVEFNLVFDRGTLFGLQSGGRTESILMSMPPVANWR. 265–267 contributes to the substrate binding site; the sequence is GGR.

This sequence belongs to the aerobic coproporphyrinogen-III oxidase family. Homodimer. A divalent metal cation serves as cofactor.

It is found in the cytoplasm. The catalysed reaction is coproporphyrinogen III + O2 + 2 H(+) = protoporphyrinogen IX + 2 CO2 + 2 H2O. It functions in the pathway porphyrin-containing compound metabolism; protoporphyrin-IX biosynthesis; protoporphyrinogen-IX from coproporphyrinogen-III (O2 route): step 1/1. In terms of biological role, involved in the heme biosynthesis. Catalyzes the aerobic oxidative decarboxylation of propionate groups of rings A and B of coproporphyrinogen-III to yield the vinyl groups in protoporphyrinogen-IX. The protein is Oxygen-dependent coproporphyrinogen-III oxidase of Burkholderia multivorans (strain ATCC 17616 / 249).